Reading from the N-terminus, the 607-residue chain is Thymidine kinase (607 aa).

Disordered regions lie at residues 1–160 and 180–215; these read MAGF…ADST and DDKSDCESEDESNFRRPSSHSALKQKNGGKGKPSGL. The span at 17–32 shows a compositional bias: basic and acidic residues; sequence KCQEDESPENERHENF. 3 stretches are compositionally biased toward polar residues: residues 88-106, 148-160, and 194-203; these read AAVTSNTGNSPGSRHTSCP, RKTSCTEGGADST, and RRPSSHSALK. Position 291–298 (291–298) interacts with ATP; it reads GAPGVGKT. Catalysis depends on E317, which acts as the Proton acceptor. Q355 contacts substrate. Position 445 (R445) interacts with ATP. R451 is a substrate binding site.

This sequence belongs to the herpesviridae thymidine kinase family. Homodimer.

It localises to the virion tegument. It is found in the host nucleus. It catalyses the reaction thymidine + ATP = dTMP + ADP + H(+). Its function is as follows. Catalyzes the transfer of the gamma-phospho group of ATP to thymidine to generate dTMP in the salvage pathway of pyrimidine synthesis. The dTMP serves as a substrate for DNA polymerase during viral DNA replication. Allows the virus to be reactivated and to grow in non-proliferative cells lacking a high concentration of phosphorylated nucleic acid precursors. The sequence is that of Thymidine kinase from Homo sapiens (Human).